A 355-amino-acid chain; its full sequence is Ubiquinone biosynthesis protein COQ4 homolog, mitochondrial (355 aa).

4 residues coordinate Zn(2+): H134, D135, H138, and E150.

This sequence belongs to the COQ4 family. As to quaternary structure, component of a multi-subunit COQ enzyme complex. Requires Zn(2+) as cofactor.

The protein localises to the mitochondrion inner membrane. It catalyses the reaction a 4-hydroxy-3-methoxy-5-(all-trans-polyprenyl)benzoate + H(+) = a 2-methoxy-6-(all-trans-polyprenyl)phenol + CO2. The protein operates within cofactor biosynthesis; ubiquinone biosynthesis. Lyase that catalyzes the C1-decarboxylation of 4-hydroxy-3-methoxy-5-(all-trans-polyprenyl)benzoic acid into 2-methoxy-6-(all-trans-polyprenyl)phenol during ubiquinone biosynthesis. This chain is Ubiquinone biosynthesis protein COQ4 homolog, mitochondrial, found in Plasmodium falciparum (isolate 3D7).